The sequence spans 78 residues: MRLILCLPVLVVVLLMVLEGPAPAQGAPAIASTFRNIPNSLKEFGNNLKDAFESIPEATQKLMTSFAEGLKNFRIPMV.

The N-terminal stretch at 1–26 is a signal peptide; it reads MRLILCLPVLVVVLLMVLEGPAPAQG.

Belongs to the apolipoprotein C1 family.

It localises to the secreted. Functionally, inhibitor of lipoprotein binding to the low density lipoprotein (LDL) receptor, LDL receptor-related protein, and very low density lipoprotein (VLDL) receptor. Associates with high density lipoproteins (HDL) and the triacylglycerol-rich lipoproteins in the plasma and makes up about 10% of the protein of the VLDL and 2% of that of HDL. Appears to interfere directly with fatty acid uptake and is also the major plasma inhibitor of cholesteryl ester transfer protein (CETP). Binds free fatty acids and reduces their intracellular esterification. Modulates the interaction of APOE with beta-migrating VLDL and inhibits binding of beta-VLDL to the LDL receptor-related protein. The sequence is that of Apolipoprotein C-I (APOC1) from Acinonyx jubatus (Cheetah).